A 207-amino-acid chain; its full sequence is ATP synthase subunit b 2 (207 aa).

The span at 1-31 (MVAQAAPPAGTAGQGTHEAASAAHGAAAAHG) shows a compositional bias: low complexity. The interval 1–41 (MVAQAAPPAGTAGQGTHEAASAAHGAAAAHGAAEEGHGKKS) is disordered. Residues 48 to 70 (ATTFASQLLWLVLSFGLLYLLMS) form a helical membrane-spanning segment.

The protein belongs to the ATPase B chain family. As to quaternary structure, F-type ATPases have 2 components, F(1) - the catalytic core - and F(0) - the membrane proton channel. F(1) has five subunits: alpha(3), beta(3), gamma(1), delta(1), epsilon(1). F(0) has three main subunits: a(1), b(2) and c(10-14). The alpha and beta chains form an alternating ring which encloses part of the gamma chain. F(1) is attached to F(0) by a central stalk formed by the gamma and epsilon chains, while a peripheral stalk is formed by the delta and b chains.

The protein resides in the cell inner membrane. Functionally, f(1)F(0) ATP synthase produces ATP from ADP in the presence of a proton or sodium gradient. F-type ATPases consist of two structural domains, F(1) containing the extramembraneous catalytic core and F(0) containing the membrane proton channel, linked together by a central stalk and a peripheral stalk. During catalysis, ATP synthesis in the catalytic domain of F(1) is coupled via a rotary mechanism of the central stalk subunits to proton translocation. In terms of biological role, component of the F(0) channel, it forms part of the peripheral stalk, linking F(1) to F(0). The polypeptide is ATP synthase subunit b 2 (Xanthobacter autotrophicus (strain ATCC BAA-1158 / Py2)).